Reading from the N-terminus, the 257-residue chain is Ubiquinone biosynthesis O-methyltransferase (257 aa).

Residues R43, G77, D98, and M144 each contribute to the S-adenosyl-L-methionine site.

The protein belongs to the methyltransferase superfamily. UbiG/COQ3 family.

The catalysed reaction is a 3-demethylubiquinol + S-adenosyl-L-methionine = a ubiquinol + S-adenosyl-L-homocysteine + H(+). It carries out the reaction a 3-(all-trans-polyprenyl)benzene-1,2-diol + S-adenosyl-L-methionine = a 2-methoxy-6-(all-trans-polyprenyl)phenol + S-adenosyl-L-homocysteine + H(+). It functions in the pathway cofactor biosynthesis; ubiquinone biosynthesis. O-methyltransferase that catalyzes the 2 O-methylation steps in the ubiquinone biosynthetic pathway. The chain is Ubiquinone biosynthesis O-methyltransferase from Psychrobacter arcticus (strain DSM 17307 / VKM B-2377 / 273-4).